A 164-amino-acid polypeptide reads, in one-letter code: RNA pyrophosphohydrolase (164 aa).

The Nudix hydrolase domain occupies 8-153 (PYRSNVGAAL…KRPIYERLAR (146 aa)). The short motif at 45-66 (GGIDGDEDPAAAVLRELDEEIG) is the Nudix box element.

This sequence belongs to the Nudix hydrolase family. RppH subfamily. A divalent metal cation is required as a cofactor.

Its function is as follows. Accelerates the degradation of transcripts by removing pyrophosphate from the 5'-end of triphosphorylated RNA, leading to a more labile monophosphorylated state that can stimulate subsequent ribonuclease cleavage. The chain is RNA pyrophosphohydrolase from Acidiphilium cryptum (strain JF-5).